A 395-amino-acid polypeptide reads, in one-letter code: Biotin biosynthesis cytochrome P450 (395 aa).

Substrate is bound at residue R60. 89-93 is a heme binding site; the sequence is HRRLR. 169–173 lines the substrate pocket; that stretch reads IDFTR. C250 and C275 are joined by a disulfide. Position 285-287 (285-287) interacts with heme; sequence TAR. Residue Y307 coordinates substrate. Residues 343-345 and C345 contribute to the heme site; that span reads HVC.

The cofactor is heme.

It carries out the reaction a C2-C8-saturated long-chain fatty acyl-[ACP] + 2 reduced [flavodoxin] + 3 O2 = 6-carboxyhexanoyl-[ACP] + a fatty aldehyde + 2 oxidized [flavodoxin] + 3 H2O + 3 H(+). The protein operates within cofactor biosynthesis; biotin biosynthesis. In terms of biological role, catalyzes the C-C bond cleavage of fatty acid linked to acyl carrier protein (ACP) to generate pimelic acid for biotin biosynthesis. It has high affinity for long-chain fatty acids with the greatest affinity for myristic acid. In Bacillus subtilis (strain 168), this protein is Biotin biosynthesis cytochrome P450 (bioI).